A 160-amino-acid chain; its full sequence is uncharacterized protein (160 aa).

A Phosphotyrosine modification is found at Tyr49.

In terms of biological role, may be involved in the assembly, structure, or function of the flagellum. May polymerize to form a filamentous structure that is part of the flagellum. This is an uncharacterized protein from Bacillus subtilis (strain 168).